The chain runs to 359 residues: Peptide chain release factor 1 (359 aa).

N5-methylglutamine is present on Gln-235. Residues 283 to 305 form a disordered region; that stretch reads QKAESERSASRKTQVGSGDRSER.

It belongs to the prokaryotic/mitochondrial release factor family. Methylated by PrmC. Methylation increases the termination efficiency of RF1.

The protein resides in the cytoplasm. In terms of biological role, peptide chain release factor 1 directs the termination of translation in response to the peptide chain termination codons UAG and UAA. The chain is Peptide chain release factor 1 from Bartonella bacilliformis (strain ATCC 35685 / KC583 / Herrer 020/F12,63).